The primary structure comprises 252 residues: 5-oxoprolinase subunit A (252 aa).

This sequence belongs to the LamB/PxpA family. Forms a complex composed of PxpA, PxpB and PxpC.

It carries out the reaction 5-oxo-L-proline + ATP + 2 H2O = L-glutamate + ADP + phosphate + H(+). Catalyzes the cleavage of 5-oxoproline to form L-glutamate coupled to the hydrolysis of ATP to ADP and inorganic phosphate. This Mycobacterium ulcerans (strain Agy99) protein is 5-oxoprolinase subunit A.